A 180-amino-acid chain; its full sequence is NAD(P)H-quinone oxidoreductase subunit I, chloroplastic (180 aa).

2 consecutive 4Fe-4S ferredoxin-type domains span residues 55-84 (GRIH…VDWR) and 95-124 (LNYS…MTEE). Residues Cys-64, Cys-67, Cys-70, Cys-74, Cys-104, Cys-107, Cys-110, and Cys-114 each coordinate [4Fe-4S] cluster.

This sequence belongs to the complex I 23 kDa subunit family. As to quaternary structure, NDH is composed of at least 16 different subunits, 5 of which are encoded in the nucleus. [4Fe-4S] cluster is required as a cofactor.

The protein resides in the plastid. It localises to the chloroplast thylakoid membrane. It carries out the reaction a plastoquinone + NADH + (n+1) H(+)(in) = a plastoquinol + NAD(+) + n H(+)(out). It catalyses the reaction a plastoquinone + NADPH + (n+1) H(+)(in) = a plastoquinol + NADP(+) + n H(+)(out). In terms of biological role, NDH shuttles electrons from NAD(P)H:plastoquinone, via FMN and iron-sulfur (Fe-S) centers, to quinones in the photosynthetic chain and possibly in a chloroplast respiratory chain. The immediate electron acceptor for the enzyme in this species is believed to be plastoquinone. Couples the redox reaction to proton translocation, and thus conserves the redox energy in a proton gradient. The polypeptide is NAD(P)H-quinone oxidoreductase subunit I, chloroplastic (Drimys granadensis).